The sequence spans 211 residues: 2,3-bisphosphoglycerate-dependent phosphoglycerate mutase (211 aa).

Residues 9-16, 22-23, Arg-61, 88-91, Lys-99, 115-116, and 159-160 contribute to the substrate site; these read RHGQSDWN, TG, ERDY, RR, and GN. The active-site Tele-phosphohistidine intermediate is the His-10. Glu-88 functions as the Proton donor/acceptor in the catalytic mechanism.

Belongs to the phosphoglycerate mutase family. BPG-dependent PGAM subfamily. As to quaternary structure, homodimer.

It catalyses the reaction (2R)-2-phosphoglycerate = (2R)-3-phosphoglycerate. It participates in carbohydrate degradation; glycolysis; pyruvate from D-glyceraldehyde 3-phosphate: step 3/5. In terms of biological role, catalyzes the interconversion of 2-phosphoglycerate and 3-phosphoglycerate. In Rhizobium johnstonii (strain DSM 114642 / LMG 32736 / 3841) (Rhizobium leguminosarum bv. viciae), this protein is 2,3-bisphosphoglycerate-dependent phosphoglycerate mutase.